The sequence spans 309 residues: Formamidopyrimidine-DNA glycosylase (309 aa).

The active-site Schiff-base intermediate with DNA is the Pro2. Glu3 serves as the catalytic Proton donor. The active-site Proton donor; for beta-elimination activity is Lys56. DNA is bound by residues His106 and Arg129. The FPG-type zinc-finger motif lies at 271–305 (NVYGRQGNACPHCESTLENIKLNGRASVYCPLCQP). Arg295 functions as the Proton donor; for delta-elimination activity in the catalytic mechanism.

This sequence belongs to the FPG family. In terms of assembly, monomer. Zn(2+) serves as cofactor.

The enzyme catalyses Hydrolysis of DNA containing ring-opened 7-methylguanine residues, releasing 2,6-diamino-4-hydroxy-5-(N-methyl)formamidopyrimidine.. It carries out the reaction 2'-deoxyribonucleotide-(2'-deoxyribose 5'-phosphate)-2'-deoxyribonucleotide-DNA = a 3'-end 2'-deoxyribonucleotide-(2,3-dehydro-2,3-deoxyribose 5'-phosphate)-DNA + a 5'-end 5'-phospho-2'-deoxyribonucleoside-DNA + H(+). In terms of biological role, involved in base excision repair of DNA damaged by oxidation or by mutagenic agents. Acts as a DNA glycosylase that recognizes and removes damaged bases. Has a preference for oxidized purines, such as 7,8-dihydro-8-oxoguanine (8-oxoG). Has AP (apurinic/apyrimidinic) lyase activity and introduces nicks in the DNA strand. Cleaves the DNA backbone by beta-delta elimination to generate a single-strand break at the site of the removed base with both 3'- and 5'-phosphates. This chain is Formamidopyrimidine-DNA glycosylase, found in Psychrobacter arcticus (strain DSM 17307 / VKM B-2377 / 273-4).